Here is a 427-residue protein sequence, read N- to C-terminus: Glutamate-1-semialdehyde 2,1-aminomutase (427 aa).

N6-(pyridoxal phosphate)lysine is present on Lys-269.

Belongs to the class-III pyridoxal-phosphate-dependent aminotransferase family. HemL subfamily. In terms of assembly, homodimer. Pyridoxal 5'-phosphate is required as a cofactor.

It localises to the cytoplasm. It catalyses the reaction (S)-4-amino-5-oxopentanoate = 5-aminolevulinate. Its pathway is porphyrin-containing compound metabolism; protoporphyrin-IX biosynthesis; 5-aminolevulinate from L-glutamyl-tRNA(Glu): step 2/2. In Thermus thermophilus (strain ATCC BAA-163 / DSM 7039 / HB27), this protein is Glutamate-1-semialdehyde 2,1-aminomutase.